The following is a 315-amino-acid chain: Ribonuclease Z (315 aa).

The Zn(2+) site is built by His-61, His-63, Asp-65, His-66, His-151, Asp-219, and His-278. Asp-65 functions as the Proton acceptor in the catalytic mechanism.

It belongs to the RNase Z family. Homodimer. Zn(2+) serves as cofactor.

The catalysed reaction is Endonucleolytic cleavage of RNA, removing extra 3' nucleotides from tRNA precursor, generating 3' termini of tRNAs. A 3'-hydroxy group is left at the tRNA terminus and a 5'-phosphoryl group is left at the trailer molecule.. In terms of biological role, zinc phosphodiesterase, which displays some tRNA 3'-processing endonuclease activity. Probably involved in tRNA maturation, by removing a 3'-trailer from precursor tRNA. This chain is Ribonuclease Z, found in Clostridium botulinum (strain Alaska E43 / Type E3).